Consider the following 565-residue polypeptide: Sulfite reductase [NADPH] hemoprotein beta-component (565 aa).

Residues C429, C435, C474, and C478 each coordinate [4Fe-4S] cluster. C478 provides a ligand contact to siroheme.

This sequence belongs to the nitrite and sulfite reductase 4Fe-4S domain family. Alpha(8)-beta(8). The alpha component is a flavoprotein, the beta component is a hemoprotein. It depends on siroheme as a cofactor. Requires [4Fe-4S] cluster as cofactor.

It catalyses the reaction hydrogen sulfide + 3 NADP(+) + 3 H2O = sulfite + 3 NADPH + 4 H(+). Its pathway is sulfur metabolism; hydrogen sulfide biosynthesis; hydrogen sulfide from sulfite (NADPH route): step 1/1. Functionally, component of the sulfite reductase complex that catalyzes the 6-electron reduction of sulfite to sulfide. This is one of several activities required for the biosynthesis of L-cysteine from sulfate. The polypeptide is Sulfite reductase [NADPH] hemoprotein beta-component (Shewanella sp. (strain W3-18-1)).